Here is a 337-residue protein sequence, read N- to C-terminus: HTH-type transcriptional repressor PurR (337 aa).

Residues 2–56 (ATIKDVAKLAAVSTTTVSHVINKTRFVAEATQKRVWEAVEELNYAPSAVARSLKC) enclose the HTH lacI-type domain. The H-T-H motif DNA-binding region spans 4-23 (IKDVAKLAAVSTTTVSHVIN). Residues 48–56 (SAVARSLKC) mediate DNA binding. Positions 73, 189, 191, 220, and 276 each coordinate hypoxanthine.

In terms of assembly, homodimer.

It participates in purine metabolism; purine nucleotide biosynthesis [regulation]. Functionally, is the main repressor of the genes involved in the de novo synthesis of purine nucleotides, regulating purB, purC, purEK, purF, purHD, purL, purMN and guaBA expression. PurR is allosterically activated to bind its cognate DNA by binding the purine corepressors, hypoxanthine or guanine, thereby effecting transcription repression. The protein is HTH-type transcriptional repressor PurR of Aliivibrio fischeri (strain ATCC 700601 / ES114) (Vibrio fischeri).